The following is a 77-amino-acid chain: Acyl carrier protein (77 aa).

The Carrier domain maps to 1–76; it reads MATFDDVKAV…DVVNYIDNLK (76 aa). An O-(pantetheine 4'-phosphoryl)serine modification is found at S36.

The protein belongs to the acyl carrier protein (ACP) family. 4'-phosphopantetheine is transferred from CoA to a specific serine of apo-ACP by AcpS. This modification is essential for activity because fatty acids are bound in thioester linkage to the sulfhydryl of the prosthetic group.

The protein resides in the cytoplasm. It functions in the pathway lipid metabolism; fatty acid biosynthesis. Carrier of the growing fatty acid chain in fatty acid biosynthesis. This Campylobacter jejuni subsp. doylei (strain ATCC BAA-1458 / RM4099 / 269.97) protein is Acyl carrier protein.